The following is a 179-amino-acid chain: Large ribosomal subunit protein uL5 (179 aa).

This sequence belongs to the universal ribosomal protein uL5 family. Part of the 50S ribosomal subunit; part of the 5S rRNA/L5/L18/L25 subcomplex. Contacts the 5S rRNA and the P site tRNA. Forms a bridge to the 30S subunit in the 70S ribosome.

This is one of the proteins that bind and probably mediate the attachment of the 5S RNA into the large ribosomal subunit, where it forms part of the central protuberance. In the 70S ribosome it contacts protein S13 of the 30S subunit (bridge B1b), connecting the 2 subunits; this bridge is implicated in subunit movement. Contacts the P site tRNA; the 5S rRNA and some of its associated proteins might help stabilize positioning of ribosome-bound tRNAs. The protein is Large ribosomal subunit protein uL5 of Geobacillus kaustophilus (strain HTA426).